The chain runs to 445 residues: Trimethylamine monooxygenase (445 aa).

FAD-binding residues include serine 14, glutamate 39, glutamine 41, leucine 47, tryptophan 48, and histidine 64. 2 residues coordinate NADP(+): tryptophan 72 and asparagine 74. Asparagine 74 and valine 127 together coordinate FAD. Residues threonine 204, serine 205, serine 207, and arginine 228 each coordinate NADP(+). FAD is bound by residues glutamine 317 and threonine 320. NADP(+) is bound at residue arginine 411.

It belongs to the FMO family. FAD is required as a cofactor.

The enzyme catalyses trimethylamine + NADPH + O2 = trimethylamine N-oxide + NADP(+) + H2O. Functionally, catalyzes the oxidation of trimethylamine (TMA) to produce trimethylamine N-oxide (TMAO). In vitro, has a broad substrate specificity, oxidizing many nitrogen- and sulfur-containing compounds, including dimethylamine (DMA), dimethylsulfide (DMS) and dimethylsulfoxide (DMSO). This is Trimethylamine monooxygenase from Roseovarius sp. (strain 217).